We begin with the raw amino-acid sequence, 397 residues long: Tryptophan synthase beta chain (397 aa).

The residue at position 87 (Lys-87) is an N6-(pyridoxal phosphate)lysine.

This sequence belongs to the TrpB family. As to quaternary structure, tetramer of two alpha and two beta chains. Requires pyridoxal 5'-phosphate as cofactor.

It carries out the reaction (1S,2R)-1-C-(indol-3-yl)glycerol 3-phosphate + L-serine = D-glyceraldehyde 3-phosphate + L-tryptophan + H2O. Its pathway is amino-acid biosynthesis; L-tryptophan biosynthesis; L-tryptophan from chorismate: step 5/5. The beta subunit is responsible for the synthesis of L-tryptophan from indole and L-serine. The chain is Tryptophan synthase beta chain from Escherichia coli O139:H28 (strain E24377A / ETEC).